Reading from the N-terminus, the 314-residue chain is Replication initiation protein (314 aa).

A compositionally biased stretch (basic and acidic residues) spans 1–18; the sequence is MSKKAEEIQAKQSLEKEN. Residues 1 to 25 are disordered; the sequence is MSKKAEEIQAKQSLEKENSNFSKTG.

It belongs to the plasmid replication initiation factor family.

Functionally, this protein is probably a specific topoisomerase involved in initiating replication. This protein is specifically required and may be rate-limiting for replication of the plasmid in vivo. This chain is Replication initiation protein (repE), found in Staphylococcus aureus.